The following is a 299-amino-acid chain: Probable tyrosine phosphatase protein J4 (299 aa).

Positions 16–289 (VEALDFLSFM…VYCYQALYVW (274 aa)) constitute a Tyrosine-protein phosphatase domain. Residue Cys230 is the Phosphocysteine intermediate of the active site.

It belongs to the protein-tyrosine phosphatase family.

The catalysed reaction is O-phospho-L-tyrosyl-[protein] + H2O = L-tyrosyl-[protein] + phosphate. This Microplitis demolitor bracovirus (isolate Webb) (MdBV) protein is Probable tyrosine phosphatase protein J4 (J5).